Here is a 435-residue protein sequence, read N- to C-terminus: Glutamine synthetase (435 aa).

The 83-residue stretch at 12–94 (KGVKYFMISY…VAADCIMDDA (83 aa)) folds into the GS beta-grasp domain. One can recognise a GS catalytic domain in the interval 100–435 (PRVVLKKLVA…EWEHQTTLDV (336 aa)). Positions 123, 125, 180, and 187 each coordinate Mg(2+). Gly232 lines the L-glutamate pocket. His236 provides a ligand contact to Mg(2+). Residue Ser240 coordinates ATP. Arg291 and Arg315 together coordinate L-glutamate. ATP contacts are provided by Arg315 and Arg320. A Mg(2+)-binding site is contributed by Glu328. Arg330 contributes to the L-glutamate binding site.

The protein belongs to the glutamine synthetase family. In terms of assembly, homooctamer. The cofactor is Mg(2+).

It carries out the reaction L-glutamate + NH4(+) + ATP = L-glutamine + ADP + phosphate + H(+). With respect to regulation, inhibited by methionine sulfoximine, ADP and pyrophosphate, but not by various nitrogen-containing metabolites that inhibit other GS enzymes. In terms of biological role, catalyzes the ATP-dependent biosynthesis of glutamine from glutamate and ammonia. In Rhizobium meliloti (strain 1021) (Ensifer meliloti), this protein is Glutamine synthetase.